The following is a 140-amino-acid chain: uncharacterized protein (140 aa).

This is an uncharacterized protein from Acidianus ambivalens (Desulfurolobus ambivalens).